The primary structure comprises 541 residues: MKLQAVMETLQRQQRARLQQELEARQLQQDSSEGRTPPSVGYPGNGSEEAEPEALKIQRAQAAALAAMRAAAAGLSQQPSPAASDEEEEDGESMASDEEDEKERDGESERYPDMGSEEEDLKGKWDEDDFEDEGEEDDYEDMEEGMGVSEAGRVGKGSTLPPKHPNPQAFPTQRSVGAERAGLPHTGHPQLQDHGDWTYEEQFKQLYELDGDPKRKEFLDDLFSFMQKRGTPVNRIPIMAKQVLDLYMLYVLVTEKGGLVEVINKKLWREITKGLNLPTSITSAAFTLRTQYMKYLYPYECEKRGLSNPNELQAAIDSNRREGRRQSFGGSLFTYSPSGAPSMLSSPKLQVSALSLGGVATNGSSLSSMQKIKKEEDSPISLTVPPRIPVSLAGHSMVAAQVAAQAAALEQLREKLESGEPPEKKMALGTEEQQRLQRAIQHNLLAMTAQLPMNIRINSQAEGRQDSAVNLTTNGTNSISMSVELNGIVYTGVLFAQPPTSASGTSKGSSNRTGSIGGGSSTSQAAPPPAPSAPTSNNPSP.

Residues 17–172 (RLQQELEARQ…KHPNPQAFPT (156 aa)) form a disordered region. Residues 55–73 (LKIQRAQAAALAAMRAAAA) show a composition bias toward low complexity. Residues 84 to 102 (SDEEEEDGESMASDEEDEK) are compositionally biased toward acidic residues. Residues 103 to 112 (ERDGESERYP) show a composition bias toward basic and acidic residues. The span at 115-144 (GSEEEDLKGKWDEDDFEDEGEEDDYEDMEE) shows a compositional bias: acidic residues. Residues 212–304 (DPKRKEFLDD…YLYPYECEKR (93 aa)) form the ARID domain. An REKLES domain is found at 407-501 (AALEQLREKL…GVLFAQPPTS (95 aa)). Residues 408–450 (ALEQLREKLESGEPPEKKMALGTEEQQRLQRAIQHNLLAMTAQ) are important for nuclear localization. Residues 452 to 473 (PMNIRINSQAEGRQDSAVNLTT) are homodimerization. The segment at 497–504 (QPPTSASG) is important for cytoplasmic localization. The tract at residues 499-541 (PTSASGTSKGSSNRTGSIGGGSSTSQAAPPPAPSAPTSNNPSP) is disordered.

Homodimer.

It localises to the nucleus. The protein localises to the cytoplasm. In terms of biological role, transcription factor required for smad1 and smad2-mediated responses to TGFbeta during mesoderm induction. This Xenopus tropicalis (Western clawed frog) protein is AT-rich interactive domain-containing protein 3A (arid3a).